A 93-amino-acid chain; its full sequence is UPF0213 protein CPE1444 (93 aa).

Residues 1-75 form the GIY-YIG domain; the sequence is MNYVYILKCK…KKLTRNQKLQ (75 aa).

It belongs to the UPF0213 family.

This Clostridium perfringens (strain 13 / Type A) protein is UPF0213 protein CPE1444.